The sequence spans 463 residues: Metalloprotease slr0863 (463 aa).

This sequence belongs to the peptidase U62 family.

In terms of biological role, probable metalloprotease. The sequence is that of Metalloprotease slr0863 from Synechocystis sp. (strain ATCC 27184 / PCC 6803 / Kazusa).